We begin with the raw amino-acid sequence, 131 residues long: MIVGLGTDIVEIARIESRIPAAGDEALLTCRLAKRVLTETEFALFVGSTQPARYLAKRFAAKEAAAKALGTGIGRGVSFQHIEISNNDNGAPQVVFTDGASERLSQLGGVKAHLSIADEQHYATATVILES.

Mg(2+) is bound by residues aspartate 8 and glutamate 63.

This sequence belongs to the P-Pant transferase superfamily. AcpS family. The cofactor is Mg(2+).

It is found in the cytoplasm. The catalysed reaction is apo-[ACP] + CoA = holo-[ACP] + adenosine 3',5'-bisphosphate + H(+). Its function is as follows. Transfers the 4'-phosphopantetheine moiety from coenzyme A to a Ser of acyl-carrier-protein. This chain is Holo-[acyl-carrier-protein] synthase, found in Shewanella pealeana (strain ATCC 700345 / ANG-SQ1).